The primary structure comprises 410 residues: FBD-associated F-box protein At5g38590 (410 aa).

Residues 1–47 (MDKINGLPDDLLVKILSYVPTDIAVSTSILSKRWEFLWMWLPNLDYT) form the F-box domain. The 51-residue stretch at 335–385 (GWNQPSSVPECLLSSLQIFKWPQYLGRPEDRDIAVYILKNARHLKKTTILA) folds into the FBD domain.

This is FBD-associated F-box protein At5g38590 from Arabidopsis thaliana (Mouse-ear cress).